The following is a 106-amino-acid chain: UPF0145 protein APL_0465 (106 aa).

The protein belongs to the UPF0145 family.

This Actinobacillus pleuropneumoniae serotype 5b (strain L20) protein is UPF0145 protein APL_0465.